The primary structure comprises 302 residues: 4-hydroxy-tetrahydrodipicolinate synthase (302 aa).

T55 is a binding site for pyruvate. Catalysis depends on Y143, which acts as the Proton donor/acceptor. K171 functions as the Schiff-base intermediate with substrate in the catalytic mechanism. I213 contributes to the pyruvate binding site.

It belongs to the DapA family. As to quaternary structure, homotetramer; dimer of dimers.

The protein resides in the cytoplasm. It carries out the reaction L-aspartate 4-semialdehyde + pyruvate = (2S,4S)-4-hydroxy-2,3,4,5-tetrahydrodipicolinate + H2O + H(+). The protein operates within amino-acid biosynthesis; L-lysine biosynthesis via DAP pathway; (S)-tetrahydrodipicolinate from L-aspartate: step 3/4. Functionally, catalyzes the condensation of (S)-aspartate-beta-semialdehyde [(S)-ASA] and pyruvate to 4-hydroxy-tetrahydrodipicolinate (HTPA). This is 4-hydroxy-tetrahydrodipicolinate synthase from Psychrobacter sp. (strain PRwf-1).